A 730-amino-acid chain; its full sequence is ABC transporter G family member 20 (730 aa).

The ABC transporter domain maps to 15-244; it reads ISLKNVCRGY…YESQTLEEVF (230 aa). ATP is bound at residue 47-54; the sequence is GASGSGKT. A disordered region spans residues 281–303; the sequence is VNNNNNNNNNNNNNNYNNNDDEE. Low complexity predominate over residues 282-298; sequence NNNNNNNNNNNNNNYNN. The 229-residue stretch at 489-717 folds into the ABC transmembrane type-2 domain; the sequence is SFETLAKQQA…FIAVLALNEK (229 aa). The next 5 helical transmembrane spans lie at 520-540, 572-592, 602-622, 634-654, and 692-712; these read FIDF…AISI, FLGH…IAIY, IALV…LGLV, IQLS…LWPL, and VWVA…IAVL.

The protein belongs to the ABC transporter superfamily.

It is found in the membrane. The polypeptide is ABC transporter G family member 20 (abcG20) (Dictyostelium discoideum (Social amoeba)).